The primary structure comprises 232 residues: UPF0758 protein BH3032 (232 aa).

The 123-residue stretch at 107–229 (VIRTPEDVSR…FVSLKEKGHL (123 aa)) folds into the MPN domain. Residues H178, H180, and D191 each coordinate Zn(2+). Residues 178–191 (HNHPSGDPTPSRED) carry the JAMM motif motif.

The protein belongs to the UPF0758 family.

In Halalkalibacterium halodurans (strain ATCC BAA-125 / DSM 18197 / FERM 7344 / JCM 9153 / C-125) (Bacillus halodurans), this protein is UPF0758 protein BH3032.